A 498-amino-acid chain; its full sequence is ATP synthase subunit beta, chloroplastic (498 aa).

172 to 179 provides a ligand contact to ATP; that stretch reads GGAGVGKT.

This sequence belongs to the ATPase alpha/beta chains family. F-type ATPases have 2 components, CF(1) - the catalytic core - and CF(0) - the membrane proton channel. CF(1) has five subunits: alpha(3), beta(3), gamma(1), delta(1), epsilon(1). CF(0) has four main subunits: a(1), b(1), b'(1) and c(9-12).

It localises to the plastid. The protein resides in the chloroplast thylakoid membrane. It catalyses the reaction ATP + H2O + 4 H(+)(in) = ADP + phosphate + 5 H(+)(out). Functionally, produces ATP from ADP in the presence of a proton gradient across the membrane. The catalytic sites are hosted primarily by the beta subunits. The chain is ATP synthase subunit beta, chloroplastic from Citrus sinensis (Sweet orange).